The primary structure comprises 574 residues: Protein OBERON 2 (574 aa).

Composition is skewed to polar residues over residues 1-10 and 65-76; these read MGTSSGSNHP and SMSQKTEPDSME. Residues 1–76 are disordered; the sequence is MGTSSGSNHP…SQKTEPDSME (76 aa). The PHD-type zinc finger occupies 226–291; the sequence is LCMCTICNKF…VFKCRACNRT (66 aa). Residues 416 to 524 are a coiled coil; sequence KKARMALETC…LFEKIKLQEN (109 aa).

As to quaternary structure, self-interacts. Interacts with OBE1, OBE3 and OBE4. Binds to VPg of pea seed borne mosaic virus (PSbMV), turnip mosaic virus (TuMV) and lettuce mosaic virus (LMV), but not with VPg of tobacco etch virus (TEV), cowpea mosaic virus (CPMV), tomato black ring virus (TBRV) and grapevine fan leaf virus (GFLV). In terms of tissue distribution, expressed in roots, seedlings, stems, leaves, flowers and siliques, especially in the vasculature.

The protein resides in the nucleus. Probable transcription factor that acts together with OBE1 for the maintenance and/or establishment of both the shoot and root meristems, probably by controlling the expression of the meristem genes such as WUS, PLT1 and PLT2 and of genes required for auxin responses. Promotes cell meristematic activity via the WUSCHEL-CLAVATA pathway. Involved in the development of the basal pole and in auxin-mediated root and vascular development in the embryo. Confers sensitivity to turnip mosaic virus (TuMV) probably by promoting viral movement and multiplication via interaction with TuMV VPg. The sequence is that of Protein OBERON 2 from Arabidopsis thaliana (Mouse-ear cress).